The primary structure comprises 422 residues: Serine--tRNA ligase (422 aa).

Position 229 to 231 (229 to 231 (TAE)) interacts with L-serine. Position 260 to 262 (260 to 262 (RRE)) interacts with ATP. An L-serine-binding site is contributed by Glu283. Position 347-350 (347-350 (EISS)) interacts with ATP. Ser383 contributes to the L-serine binding site.

This sequence belongs to the class-II aminoacyl-tRNA synthetase family. Type-1 seryl-tRNA synthetase subfamily. In terms of assembly, homodimer. The tRNA molecule binds across the dimer.

It is found in the cytoplasm. It catalyses the reaction tRNA(Ser) + L-serine + ATP = L-seryl-tRNA(Ser) + AMP + diphosphate + H(+). The catalysed reaction is tRNA(Sec) + L-serine + ATP = L-seryl-tRNA(Sec) + AMP + diphosphate + H(+). It participates in aminoacyl-tRNA biosynthesis; selenocysteinyl-tRNA(Sec) biosynthesis; L-seryl-tRNA(Sec) from L-serine and tRNA(Sec): step 1/1. In terms of biological role, catalyzes the attachment of serine to tRNA(Ser). Is also able to aminoacylate tRNA(Sec) with serine, to form the misacylated tRNA L-seryl-tRNA(Sec), which will be further converted into selenocysteinyl-tRNA(Sec). This is Serine--tRNA ligase from Pelobacter propionicus (strain DSM 2379 / NBRC 103807 / OttBd1).